We begin with the raw amino-acid sequence, 171 residues long: MARTAPTSNEERGDGLREKMISVNRVTKVVKGGRIMGFAALTVVGDGDGGIGMGKGKSREVPVAVQKAMEEARRKLVKISLKNGTFHHTVVGQHGASRVLIQPASEGTGIIAGGAMRAVFEVMGVQNVLAKCLGSTNPYNVVRATIDGLMKMSTPSEIAAKRGKSVEDITG.

Residues 16-79 (LREKMISVNR…EEARRKLVKI (64 aa)) enclose the S5 DRBM domain.

It belongs to the universal ribosomal protein uS5 family. As to quaternary structure, part of the 30S ribosomal subunit. Contacts proteins S4 and S8.

In terms of biological role, with S4 and S12 plays an important role in translational accuracy. Located at the back of the 30S subunit body where it stabilizes the conformation of the head with respect to the body. In Thiobacillus denitrificans (strain ATCC 25259 / T1), this protein is Small ribosomal subunit protein uS5.